The primary structure comprises 466 residues: Asparagine--tRNA ligase (466 aa).

This sequence belongs to the class-II aminoacyl-tRNA synthetase family. In terms of assembly, homodimer.

The protein resides in the cytoplasm. The enzyme catalyses tRNA(Asn) + L-asparagine + ATP = L-asparaginyl-tRNA(Asn) + AMP + diphosphate + H(+). This Yersinia enterocolitica serotype O:8 / biotype 1B (strain NCTC 13174 / 8081) protein is Asparagine--tRNA ligase.